We begin with the raw amino-acid sequence, 361 residues long: 3-dehydroquinate synthase (361 aa).

The protein belongs to the archaeal-type DHQ synthase family.

The enzyme catalyses 2-amino-2,3,7-trideoxy-D-lyxo-hept-6-ulosonate + NAD(+) + H2O = 3-dehydroquinate + NH4(+) + NADH + H(+). In terms of biological role, catalyzes the oxidative deamination and cyclization of 2-amino-3,7-dideoxy-D-threo-hept-6-ulosonic acid (ADH) to yield 3-dehydroquinate (DHQ), which is fed into the canonical shikimic pathway of aromatic amino acid biosynthesis. In Methanococcus maripaludis (strain C7 / ATCC BAA-1331), this protein is 3-dehydroquinate synthase.